A 412-amino-acid chain; its full sequence is Potassium channel, subfamily K, member 13 (412 aa).

The Cytoplasmic segment spans residues 1-21; it reads MACRSGCCCNSIGSFNEDNAR. The chain crosses the membrane as a helical span at residues 22–42; it reads FLMLALLIIIYLLCGAAVFSA. Positions 97–117 form an intramembrane region, pore-forming; the sequence is WDFAGAFYFVGTVVSTIGFGM. K(+) contacts are provided by T112, I113, and G114. A selectivity filter 1 region spans residues 112–117; the sequence is TIGFGM. The helical transmembrane segment at 127–147 threads the bilayer; the sequence is IFLIFYGLIGCAATILFFNLF. The Cytoplasmic segment spans residues 148–198; it reads LERVITVIAFVLKFCHERRESRKAGPTQNCRRPSTDNRDRRTDSLAGWKPS. A helical membrane pass occupies residues 199 to 219; the sequence is VYCVMLILGVAAILVSCCASA. The segment at residues 229-249 is an intramembrane region (pore-forming); that stretch reads YLDALYFCFVAFSTIGFGDMV. T242, I243, G244, and F245 together coordinate K(+). A selectivity filter 2 region spans residues 242-247; it reads TIGFGD. The helical transmembrane segment at 268–288 threads the bilayer; that stretch reads LFILTGVCCIYSLFNVISIVI. Residues 289-412 lie on the Cytoplasmic side of the membrane; it reads KQVLNWLLRR…NRLAETSVDR (124 aa). Over residues 374–386 the composition is skewed to polar residues; that stretch reads MANGHPRQSGSSS. A disordered region spans residues 374-395; that stretch reads MANGHPRQSGSSSRHNEFSGGV.

The protein belongs to the two pore domain potassium channel (TC 1.A.1.8) family. As to quaternary structure, homodimer. Heterodimer. As to expression, brain and heart.

Its subcellular location is the cell membrane. The catalysed reaction is K(+)(in) = K(+)(out). The channel conductance is activated by arachidonic acid and inhibited by Ba(2+) ions, volatile anesthetics such as halothane and antiarrhythmic drug mexiletine. Insensitive to extracellular pH change. In terms of biological role, k(+) channel that conducts outward rectifying tonic currents potentiated by purinergic signals. Homo- and heterodimerizes to form functional channels with distinct regulatory and gating properties. Contributes most of K(+) currents at the plasma membrane of resting microglia. Maintains a depolarized membrane potential required for proper ramified microglia morphology and phagocytosis, selectively mediating microglial pruning of presynaptic compartments at hippocampal excitatory synapses. Upon local release of ATP caused by neuronal injury or infection, it is potentiated by purinergic signaling and contributes to ATP-triggered K(+) efflux underlying microglial NLRP3 inflammasome assembly and IL1B release. The sequence is that of Potassium channel, subfamily K, member 13 from Danio rerio (Zebrafish).